The sequence spans 592 residues: Threonine dehydratase biosynthetic, chloroplastic (592 aa).

The N-terminal 91 residues, 1-91, are a transit peptide targeting the chloroplast; it reads MNSVQLPTAQ…NEAENGSIAE (91 aa). Residue K141 is modified to N6-(pyridoxal phosphate)lysine. ACT-like domains lie at 419–490 and 512–583; these read AVLA…NLTT and VLCR…LVSD.

It belongs to the serine/threonine dehydratase family. Pyridoxal 5'-phosphate is required as a cofactor.

The protein localises to the plastid. The protein resides in the chloroplast. The enzyme catalyses L-threonine = 2-oxobutanoate + NH4(+). It functions in the pathway amino-acid biosynthesis; L-isoleucine biosynthesis; 2-oxobutanoate from L-threonine: step 1/1. With respect to regulation, allosterically inhibited by isoleucine. Strain GM11b is isoleucine feedback insensitive and is resistant to the antimetabolite L-O-methylthreonine. Functionally, catalyzes the formation of alpha-ketobutyrate from threonine in a two-step reaction. The first step is a dehydration of threonine, followed by rehydration and liberation of ammonia. This is Threonine dehydratase biosynthetic, chloroplastic (OMR1) from Arabidopsis thaliana (Mouse-ear cress).